The following is a 93-amino-acid chain: Exodeoxyribonuclease 7 small subunit (93 aa).

The span at 1-17 (MAKSSASSLSSAKPVAA) shows a compositional bias: low complexity. Residues 1 to 22 (MAKSSASSLSSAKPVAAGPDAS) form a disordered region.

This sequence belongs to the XseB family. As to quaternary structure, heterooligomer composed of large and small subunits.

Its subcellular location is the cytoplasm. It carries out the reaction Exonucleolytic cleavage in either 5'- to 3'- or 3'- to 5'-direction to yield nucleoside 5'-phosphates.. Bidirectionally degrades single-stranded DNA into large acid-insoluble oligonucleotides, which are then degraded further into small acid-soluble oligonucleotides. The chain is Exodeoxyribonuclease 7 small subunit from Polaromonas naphthalenivorans (strain CJ2).